The sequence spans 284 residues: Diaminopimelate epimerase (284 aa).

2 residues coordinate substrate: asparagine 13 and asparagine 66. The Proton donor role is filled by cysteine 75. Substrate is bound by residues 76-77 (GN), asparagine 166, asparagine 199, and 217-218 (ER). Cysteine 226 acts as the Proton acceptor in catalysis. Residue 227 to 228 (GT) coordinates substrate.

The protein belongs to the diaminopimelate epimerase family. As to quaternary structure, homodimer.

It is found in the cytoplasm. It carries out the reaction (2S,6S)-2,6-diaminopimelate = meso-2,6-diaminopimelate. The protein operates within amino-acid biosynthesis; L-lysine biosynthesis via DAP pathway; DL-2,6-diaminopimelate from LL-2,6-diaminopimelate: step 1/1. Functionally, catalyzes the stereoinversion of LL-2,6-diaminopimelate (L,L-DAP) to meso-diaminopimelate (meso-DAP), a precursor of L-lysine and an essential component of the bacterial peptidoglycan. This Halothermothrix orenii (strain H 168 / OCM 544 / DSM 9562) protein is Diaminopimelate epimerase.